A 577-amino-acid chain; its full sequence is Moesin (577 aa).

One can recognise an FERM domain in the interval 2-295 (PKTINVRVTT…GNHELYMRRR (294 aa)). At Ser74 the chain carries Phosphoserine. Lys79 bears the N6-acetyllysine mark. The residue at position 83 (Lys83) is an N6-succinyllysine. The [IL]-x-C-x-x-[DE] motif signature appears at 115 to 120 (IYCPPE). Tyr116 is modified (phosphotyrosine). Cys117 bears the S-nitrosocysteine mark. N6-acetyllysine occurs at positions 139 and 165. Over residues 376–414 (EQERKRAQSEAEKLAKERQEAEEAKEALLKASRDQKKTQ) the composition is skewed to basic and acidic residues. Disordered regions lie at residues 376-415 (EQER…KTQE) and 434-518 (ARQK…NERV). At Ser407 the chain carries Phosphoserine. A compositionally biased stretch (acidic residues) spans 476-487 (AENDQDEQDENG). Basic and acidic residues predominate over residues 492–518 (ADLRADAMAKDRSEEERTTEAEKNERV). A Phosphoserine modification is found at Ser527. Phosphothreonine; by ROCK2 and STK10 is present on Thr558.

In terms of assembly, binds NHERF1. In resting T-cells, part of a PAG1-NHERF1-MSN complex which is disrupted upon TCR activation. Interacts with PPP1R16B. Interacts with PDZD8. Interacts with SELPLG and SYK; mediates the activation of SYK by SELPLG. Interacts with PDPN (via cytoplasmic domain); activates RHOA and promotes epithelial-mesenchymal transition. Interacts with SPN/CD43 cytoplasmic tail, CD44 and ICAM2. Phosphorylation on Thr-558 is crucial for the formation of microvilli-like structures. Phosphorylation by ROCK2 suppresses the head-to-tail association of the N-terminal and C-terminal halves resulting in an opened conformation which is capable of actin and membrane-binding. Phosphorylation on Thr-558 by STK10 negatively regulates lymphocyte migration and polarization. In terms of processing, S-nitrosylation of Cys-117 is induced by interferon-gamma and oxidatively-modified low-densitity lipoprotein (LDL(ox)) implicating the iNOS-S100A8/9 transnitrosylase complex.

Its subcellular location is the cell membrane. The protein localises to the cytoplasm. It is found in the cytoskeleton. The protein resides in the apical cell membrane. It localises to the cell projection. Its subcellular location is the microvillus membrane. The protein localises to the microvillus. Its activity is regulated as follows. A head-to-tail association, of the N-terminal and C-terminal halves results in a closed conformation (inactive form) which is incapable of actin or membrane-binding. Functionally, probably involved in connections of major cytoskeletal structures to the plasma membrane. Plays a role in regulating the proliferation, migration, and adhesion of human lymphoid cells and participates in immunologic synapse formation. This Sus scrofa (Pig) protein is Moesin.